Reading from the N-terminus, the 144-residue chain is Putative sugar phosphate isomerase RC0402 (144 aa).

His-12 contacts substrate. His-101 serves as the catalytic Proton donor. Arg-135 contacts substrate.

It belongs to the LacAB/RpiB family.

The chain is Putative sugar phosphate isomerase RC0402 from Rickettsia conorii (strain ATCC VR-613 / Malish 7).